The following is a 129-amino-acid chain: Small ribosomal subunit protein uS11 (129 aa).

Belongs to the universal ribosomal protein uS11 family. Part of the 30S ribosomal subunit. Interacts with proteins S7 and S18. Binds to IF-3.

Its function is as follows. Located on the platform of the 30S subunit, it bridges several disparate RNA helices of the 16S rRNA. Forms part of the Shine-Dalgarno cleft in the 70S ribosome. This is Small ribosomal subunit protein uS11 from Staphylococcus epidermidis (strain ATCC 12228 / FDA PCI 1200).